The following is a 198-amino-acid chain: ATP synthase subunit delta (198 aa).

This sequence belongs to the ATPase delta chain family. F-type ATPases have 2 components, F(1) - the catalytic core - and F(0) - the membrane proton channel. F(1) has five subunits: alpha(3), beta(3), gamma(1), delta(1), epsilon(1). F(0) has three main subunits: a(1), b(2) and c(10-14). The alpha and beta chains form an alternating ring which encloses part of the gamma chain. F(1) is attached to F(0) by a central stalk formed by the gamma and epsilon chains, while a peripheral stalk is formed by the delta and b chains.

Its subcellular location is the cell inner membrane. In terms of biological role, f(1)F(0) ATP synthase produces ATP from ADP in the presence of a proton or sodium gradient. F-type ATPases consist of two structural domains, F(1) containing the extramembraneous catalytic core and F(0) containing the membrane proton channel, linked together by a central stalk and a peripheral stalk. During catalysis, ATP synthesis in the catalytic domain of F(1) is coupled via a rotary mechanism of the central stalk subunits to proton translocation. Its function is as follows. This protein is part of the stalk that links CF(0) to CF(1). It either transmits conformational changes from CF(0) to CF(1) or is implicated in proton conduction. This is ATP synthase subunit delta from Gluconacetobacter diazotrophicus (strain ATCC 49037 / DSM 5601 / CCUG 37298 / CIP 103539 / LMG 7603 / PAl5).